We begin with the raw amino-acid sequence, 335 residues long: Phosphatidate cytidylyltransferase, mitochondrial (335 aa).

Belongs to the TAM41 family. The cofactor is Mg(2+).

It is found in the mitochondrion inner membrane. The enzyme catalyses a 1,2-diacyl-sn-glycero-3-phosphate + CTP + H(+) = a CDP-1,2-diacyl-sn-glycerol + diphosphate. The protein operates within phospholipid metabolism; CDP-diacylglycerol biosynthesis; CDP-diacylglycerol from sn-glycerol 3-phosphate: step 3/3. Its function is as follows. Catalyzes the conversion of phosphatidic acid (PA) to CDP-diacylglycerol (CDP-DAG), an essential intermediate in the synthesis of phosphatidylglycerol, cardiolipin and phosphatidylinositol. The sequence is that of Phosphatidate cytidylyltransferase, mitochondrial (TAMM41) from Bos taurus (Bovine).